Reading from the N-terminus, the 240-residue chain is Cysteine-rich secretory protein (240 aa).

The N-terminal stretch at 1–19 is a signal peptide; that stretch reads MIAFIVLPILAAVLQQSSG. The 129-residue stretch at 38–166 folds into the SCP domain; the sequence is VDLHNSLRRS…EYSYFYVCQY (129 aa). 8 cysteine pairs are disulfide-bonded: C75–C153, C92–C167, C148–C164, C186–C193, C189–C198, C202–C235, C211–C229, and C220–C233. The 34-residue stretch at 202–235 folds into the ShKT domain; sequence CTKEDKYSNCKSLVQQAGCQDKQMQSDCSAICFC.

This sequence belongs to the CRISP family. In terms of tissue distribution, expressed by the venom gland.

The protein localises to the secreted. In terms of biological role, weakly blocks contraction of smooth muscle elicited by high potassium-induced depolarization, but does not block caffeine-stimulated contraction. May target voltage-gated calcium channels on smooth muscle. The chain is Cysteine-rich secretory protein from Crotalus adamanteus (Eastern diamondback rattlesnake).